We begin with the raw amino-acid sequence, 184 residues long: dITP/XTP pyrophosphatase (184 aa).

8–13 (TGNKGK) contacts substrate. Mg(2+) is bound by residues glutamate 37 and aspartate 66. The Proton acceptor role is filled by aspartate 66. Substrate is bound by residues serine 67, 142 to 145 (FGYD), lysine 163, and 168 to 169 (HR).

This sequence belongs to the HAM1 NTPase family. As to quaternary structure, homodimer. Mg(2+) is required as a cofactor.

The enzyme catalyses XTP + H2O = XMP + diphosphate + H(+). The catalysed reaction is dITP + H2O = dIMP + diphosphate + H(+). It carries out the reaction ITP + H2O = IMP + diphosphate + H(+). Its function is as follows. Pyrophosphatase that catalyzes the hydrolysis of nucleoside triphosphates to their monophosphate derivatives, with a high preference for the non-canonical purine nucleotides XTP (xanthosine triphosphate), dITP (deoxyinosine triphosphate) and ITP. Seems to function as a house-cleaning enzyme that removes non-canonical purine nucleotides from the nucleotide pool, thus preventing their incorporation into DNA/RNA and avoiding chromosomal lesions. This is dITP/XTP pyrophosphatase from Methanosarcina mazei (strain ATCC BAA-159 / DSM 3647 / Goe1 / Go1 / JCM 11833 / OCM 88) (Methanosarcina frisia).